The chain runs to 311 residues: Quinolinate synthase (311 aa).

Iminosuccinate is bound by residues His25 and Ser42. Residue Cys87 coordinates [4Fe-4S] cluster. Residues 113–115 and Ser130 contribute to the iminosuccinate site; that span reads YIN. Residue Cys175 participates in [4Fe-4S] cluster binding. Iminosuccinate contacts are provided by residues 201–203 and Thr218; that span reads HPE. Cys268 is a binding site for [4Fe-4S] cluster.

Belongs to the quinolinate synthase family. Type 2 subfamily. [4Fe-4S] cluster is required as a cofactor.

It localises to the cytoplasm. It carries out the reaction iminosuccinate + dihydroxyacetone phosphate = quinolinate + phosphate + 2 H2O + H(+). It participates in cofactor biosynthesis; NAD(+) biosynthesis; quinolinate from iminoaspartate: step 1/1. In terms of biological role, catalyzes the condensation of iminoaspartate with dihydroxyacetone phosphate to form quinolinate. This Saccharolobus solfataricus (strain ATCC 35092 / DSM 1617 / JCM 11322 / P2) (Sulfolobus solfataricus) protein is Quinolinate synthase.